A 315-amino-acid chain; its full sequence is Lipoyl synthase (315 aa).

The interval 1 to 33 is disordered; the sequence is MADMPPVLRHPEKAHRPDQPQPKKPDWIRVKAP. The span at 9–29 shows a compositional bias: basic and acidic residues; sequence RHPEKAHRPDQPQPKKPDWIR. [4Fe-4S] cluster contacts are provided by cysteine 54, cysteine 59, cysteine 65, cysteine 80, cysteine 84, cysteine 87, and serine 294. Residues 66–283 form the Radical SAM core domain; the sequence is WSQGHATMMI…EKAAYGKGFL (218 aa).

Belongs to the radical SAM superfamily. Lipoyl synthase family. [4Fe-4S] cluster serves as cofactor.

Its subcellular location is the cytoplasm. It catalyses the reaction [[Fe-S] cluster scaffold protein carrying a second [4Fe-4S](2+) cluster] + N(6)-octanoyl-L-lysyl-[protein] + 2 oxidized [2Fe-2S]-[ferredoxin] + 2 S-adenosyl-L-methionine + 4 H(+) = [[Fe-S] cluster scaffold protein] + N(6)-[(R)-dihydrolipoyl]-L-lysyl-[protein] + 4 Fe(3+) + 2 hydrogen sulfide + 2 5'-deoxyadenosine + 2 L-methionine + 2 reduced [2Fe-2S]-[ferredoxin]. Its pathway is protein modification; protein lipoylation via endogenous pathway; protein N(6)-(lipoyl)lysine from octanoyl-[acyl-carrier-protein]: step 2/2. Functionally, catalyzes the radical-mediated insertion of two sulfur atoms into the C-6 and C-8 positions of the octanoyl moiety bound to the lipoyl domains of lipoate-dependent enzymes, thereby converting the octanoylated domains into lipoylated derivatives. The sequence is that of Lipoyl synthase from Paracoccus denitrificans (strain Pd 1222).